The chain runs to 90 residues: Kunitz-type serine protease inhibitor 1 (90 aa).

An N-terminal signal peptide occupies residues 1–24 (MSSGGLLLLLGLLTLWAELTPVSG). A Pyrrolidone carboxylic acid modification is found at Gln-25. A BPTI/Kunitz inhibitor domain is found at 31–81 (CYLPADPGRCKAHIPRFYYDSASNKCNKFIYGGCPGNANNFKTWDECRQTC). Intrachain disulfides connect Cys-31/Cys-81, Cys-40/Cys-64, and Cys-56/Cys-77. A propeptide spanning residues 86–90 (MGRPT) is cleaved from the precursor.

The protein belongs to the venom Kunitz-type family. Expressed by the venom gland.

It is found in the secreted. Its function is as follows. Serine protease inhibitor that principally inhibits trypsin (Ki=0.34 nM). Also inhibits alpha-chymotrypsin (Ki=270 nM), plasmin, plasma and pancreatic kallikrein. In Vipera ammodytes ammodytes (Western sand viper), this protein is Kunitz-type serine protease inhibitor 1.